Here is a 668-residue protein sequence, read N- to C-terminus: GTP-binding protein 1 (668 aa).

The tract at residues Met1–Ala32 is disordered. Ser6, Ser8, Ser12, Ser24, Ser25, Ser44, Ser47, and Ser69 each carry phosphoserine. The tr-type G domain occupies Phe158 to Tyr389. Residues Gly167–Ser174 are G1. Residue Gly167 to Ser174 coordinates GTP. A G2 region spans residues Gly206–Ser210. The segment at Asp252–Gly255 is G3. Residues Asp252–His256 and Thr308–Asp311 contribute to the GTP site. A G4 region spans residues Thr308–Asp311. Positions Ser366–Val368 are G5. The span at Leu573–Lys595 shows a compositional bias: polar residues. Residues Leu573–Cys668 form a disordered region. Ser580 is subject to Phosphoserine. Positions Gly609–Gly619 are enriched in low complexity. The segment covering Ser624–Gln637 has biased composition (polar residues). Residues Gly646–Lys657 show a composition bias toward basic residues.

It belongs to the TRAFAC class translation factor GTPase superfamily. Classic translation factor GTPase family. GTPBP1 subfamily. Interacts with EXOSC2/RRP4, EXOSC3/RRP40, EXOSC5/RRP46, HNRNPD, HNRNPR and SYNCRIP. Identified in a complex with AANAT mRNA, but does not bind mRNA by itself. As to expression, detected in some neurons in the brain cortex. Detected in small arteries, dendritic cells and macrophages in the thymus. Detected in lung bronchi, in bronchial epithelial cells and in bronchial smooth muscle cells. Detected in smooth muscle cells in a broad range of organs (at protein level). Expressed in brain, thymus, lung, and kidney.

The protein localises to the cytoplasm. In terms of biological role, promotes degradation of target mRNA species. Plays a role in the regulation of circadian mRNA stability. Binds GTP and has GTPase activity. The chain is GTP-binding protein 1 (Gtpbp1) from Mus musculus (Mouse).